The chain runs to 401 residues: MSIISTRLSSIKPSPTLAVVKKTLELKKAGVDIITLGAGEPDFDTPDNIKEGAIKAIKDGFTKYTNVEGMPLLKQAIKDKFKRENNIDYELDEIIVSTGGKQVIYNLFMASLDQGDEVIIPAPYWVSYPDMVALSTGTPVFVNCGIENNFKLSAEALERSITDKTKWLIINSPSNPTGASYNFEELENIAKVLRKYSHVNVMSDDIYEHITFDDFKFYTLAQIAPDLKKRIFTVNGVSKAYSMTGWRIGYGAGSKTLIKAMTIIQSQSTSNPCSISQMAAIEALNGPQDYIKPNALNCQKKRDLALSILKRVKYFECYKPEGAFYLFVKCDKIFGHKTKSGTIIANSNDFAEYLLEEAKVAVVPGIAFGLEGYFRISYATSMEELEKACIRIEKTIDVIPA.

The L-aspartate site is built by Gly-39, Trp-125, and Asn-175. Residue Lys-239 is modified to N6-(pyridoxal phosphate)lysine. Arg-375 contributes to the L-aspartate binding site.

Belongs to the class-I pyridoxal-phosphate-dependent aminotransferase family. Homodimer. Requires pyridoxal 5'-phosphate as cofactor.

The protein localises to the cytoplasm. It catalyses the reaction L-aspartate + 2-oxoglutarate = oxaloacetate + L-glutamate. It carries out the reaction L-arogenate + 2-oxoglutarate = prephenate + L-glutamate. Functionally, catalyzes the reversible conversion of aspartate and 2-oxoglutarate to glutamate and oxaloacetate. Can also transaminate prephenate in the presence of glutamate. This Rickettsia conorii (strain ATCC VR-613 / Malish 7) protein is Probable aspartate/prephenate aminotransferase (aatA).